We begin with the raw amino-acid sequence, 220 residues long: MASERLPSRPACLLVASGAAEGVSAQSFLHCFTLASAAFNLQVATPGGKTMDFVDVNESNARWVQDFRLKAYASPAKLESIDGARYHALLIPSCPGALVDLASSGSLARILQHFHSESKPICAVGHGVAALCCATSEDRSWVFQGYSVTGPSVYELVRAPGFAHLPLIVEDFVKDAGACFSASEPDAMHVVLDRHLVTGQNASSTVPAVQNLLFLCGSRK.

The first 35 residues, 1 to 35 (MASERLPSRPACLLVASGAAEGVSAQSFLHCFTLA), serve as a signal peptide directing secretion. N-linked (GlcNAc...) asparagine glycosylation is found at Asn-57 and Asn-201.

It belongs to the peptidase C56 family. As to quaternary structure, homotetramer. Component of the FERRY complex composed of five subunits, TBCK, PPP1R21, FERRY3, CRYZL1 and GATD1 with a ratio of 1:2:1:2:4, respectively.

The protein localises to the secreted. The protein resides in the early endosome. Functionally, component of the FERRY complex (Five-subunit Endosomal Rab5 and RNA/ribosome intermediary). The FERRY complex directly interacts with mRNAs and RAB5A, and functions as a RAB5A effector involved in the localization and the distribution of specific mRNAs most likely by mediating their endosomal transport. The complex recruits mRNAs and ribosomes to early endosomes through direct mRNA-interaction. This Bos taurus (Bovine) protein is Glutamine amidotransferase-like class 1 domain-containing protein 1.